The following is an 82-amino-acid chain: Protein transport protein Sec61 subunit beta (82 aa).

Residue Met-1 is modified to N-acetylmethionine. Residues 1-34 form a disordered region; that stretch reads MVGSGAPQRGSAAATASMRRRKPTSGAGGGGASG. At 1–55 the chain is on the cytoplasmic side; that stretch reads MVGSGAPQRGSAAATASMRRRKPTSGAGGGGASGGAAGSMLQFYTDDAPGLKISP. Residues 56–76 form a helical membrane-spanning segment; the sequence is NVVLIMSIGFIAFVAVLHVMG.

The protein belongs to the SEC61-beta family. As to quaternary structure, heterotrimeric complex composed of SEC61-alpha, SEC61-beta and SEC61-gamma.

The protein resides in the endoplasmic reticulum membrane. In terms of biological role, necessary for protein translocation in the endoplasmic reticulum. This Arabidopsis thaliana (Mouse-ear cress) protein is Protein transport protein Sec61 subunit beta.